A 577-amino-acid polypeptide reads, in one-letter code: Thiol:disulfide interchange protein DsbD (577 aa).

A signal peptide spans 1-23 (MAQRIFTLIFLLWTAVGTPQVAA). 2 cysteine pairs are disulfide-bonded: C131–C137 and C194–C316. 7 helical membrane passes run 182–202 (ALLI…YPLI), 225–245 (YVQG…AAGL), 255–275 (YILI…FGLY), 308–328 (LAGL…LLYI), 338–358 (GGTL…VTLF), 369–389 (WMQY…VFLL), and 396–416 (AWGI…ALML). The 141-residue stretch at 437-577 (VISAKPLQDW…FQAHLQKFSP (141 aa)) folds into the Thioredoxin domain. A disulfide bond links C492 and C495.

It belongs to the thioredoxin family. DsbD subfamily.

The protein localises to the cell inner membrane. The enzyme catalyses [protein]-dithiol + NAD(+) = [protein]-disulfide + NADH + H(+). The catalysed reaction is [protein]-dithiol + NADP(+) = [protein]-disulfide + NADPH + H(+). In terms of biological role, required to facilitate the formation of correct disulfide bonds in some periplasmic proteins and for the assembly of the periplasmic c-type cytochromes. Acts by transferring electrons from cytoplasmic thioredoxin to the periplasm. This transfer involves a cascade of disulfide bond formation and reduction steps. This Pectobacterium atrosepticum (strain SCRI 1043 / ATCC BAA-672) (Erwinia carotovora subsp. atroseptica) protein is Thiol:disulfide interchange protein DsbD.